Reading from the N-terminus, the 264-residue chain is Large ribosomal subunit protein mL50 (264 aa).

Residues 1-75 constitute a mitochondrion transit peptide; that stretch reads MSSLLKLHCI…EEGTNEASSQ (75 aa).

It belongs to the mitochondrion-specific ribosomal protein mL50 family. Component of the mitochondrial large ribosomal subunit (mt-LSU). Mature yeast 74S mitochondrial ribosomes consist of a small (37S) and a large (54S) subunit. The 37S small subunit contains a 15S ribosomal RNA (15S mt-rRNA) and 34 different proteins. The 54S large subunit contains a 21S rRNA (21S mt-rRNA) and 46 different proteins.

The protein localises to the mitochondrion. In terms of biological role, component of the mitochondrial ribosome (mitoribosome), a dedicated translation machinery responsible for the synthesis of mitochondrial genome-encoded proteins, including at least some of the essential transmembrane subunits of the mitochondrial respiratory chain. The mitoribosomes are attached to the mitochondrial inner membrane and translation products are cotranslationally integrated into the membrane. This Saccharomyces cerevisiae (strain ATCC 204508 / S288c) (Baker's yeast) protein is Large ribosomal subunit protein mL50 (MRPL13).